Here is a 132-residue protein sequence, read N- to C-terminus: L-ectoine synthase (132 aa).

It belongs to the ectoine synthase family.

The enzyme catalyses (2S)-4-acetamido-2-aminobutanoate = L-ectoine + H2O. Its pathway is amine and polyamine biosynthesis; ectoine biosynthesis; L-ectoine from L-aspartate 4-semialdehyde: step 3/3. In terms of biological role, catalyzes the circularization of gamma-N-acetyl-alpha,gamma-diaminobutyric acid (ADABA) to ectoine (1,4,5,6-tetrahydro-2-methyl-4-pyrimidine carboxylic acid), which is an excellent osmoprotectant. The polypeptide is L-ectoine synthase (Rhodococcus jostii (strain RHA1)).